The following is a 634-amino-acid chain: MRRPKKYESGEATQYISRRAALRRLQLSLNDFRRLCILKGVYPREPKHRRRAQKGSSEIKILYHAKDIRFLLHESIVWTLRDYKIFAKKSGRDRAIKDFRNLKRRLALFPEIKLDHIVKERYPTFIDALKDLDDCLTLLFLFSTFPSLHLIPREQSALCRRLTIEFLHYVIASKSLRKVFISIKGYYFQAEIKGQKVTWIVPHYYPFKPQSRQDVDFKVMSIFVEFYTIMLGFVNFRLFHGLNLAYPPQFPSSVLQDNSETLQDESSFVSDRIAALNFELLRTDKLMEDEEELDIDMELLEQDGDSKRIIKMKQEAQEVARLRTLFKGLKFFINREVPREPLIILIRSFGGKVSWDASVFAGATFDESDETITHQIVDRPSLSTQYISRDYIQPQWVFDCINQRQLLPTNKYFMGEQLPPHLSPFVDSKRETYIPPEEKALHDPSLIETHVQSDDDDDDSDAEADNQEEEEIEQQLLDAQLQRAYQQETAEYKKYGGTDGVNEDEEDSVDDDDEEDEEEEEEEDVEQLDDKTKRLLEEKQKMKVESGKVHKVNKRQIRKAEVDEHRLQARMVKPRHRNLFRKLIREKQTKEKEEWLLRKKRRNIDADAKEAKKTAKREAKKAAAEAAAKALKMA.

In terms of domain architecture, BRCT spans Arg-321–Met-414. Disordered stretches follow at residues Glu-437 to Glu-473, Glu-491 to Glu-561, and Asn-603 to Ala-634. Phosphoserine is present on Ser-453. Composition is skewed to acidic residues over residues Asp-454–Glu-473 and Val-501–Gln-527. Coiled coils occupy residues Ser-460 to Ser-546 and Leu-596 to Lys-629. Composition is skewed to basic and acidic residues over residues Leu-528–Lys-548 and Asn-603–Ala-623. The span at Ala-624–Ala-634 shows a compositional bias: low complexity.

Belongs to the pescadillo family.

The protein resides in the nucleus. The protein localises to the nucleolus. It localises to the nucleoplasm. Required for maturation of ribosomal RNAs and formation of the large ribosomal subunit. The polypeptide is Pescadillo homolog (Drosophila willistoni (Fruit fly)).